Reading from the N-terminus, the 662-residue chain is Replication protein E1 (662 aa).

Positions 28-38 (VDRRTGDKPSS) are enriched in basic and acidic residues. The interval 28 to 60 (VDRRTGDKPSSDEDEDEDADEGEDFVDFIDDRP) is disordered. The segment covering 39–55 (DEDEDEDADEGEDFVDF) has biased composition (acidic residues). A Nuclear localization signal motif is present at residues 88-90 (KRK). Serine 94, serine 98, and serine 111 each carry phosphoserine; by host. The Nuclear export signal signature appears at 110–119 (LSPRLDAIKL). Residues 160-197 (TQDGRQDADEGSGRNVGGNGGQEEERAGGDGEESQTQG) form a disordered region. Residues 199–365 (QTDKAACGVL…QTMVGHALEE (167 aa)) form a DNA-binding region region. Residues 464–614 (VEFIPFLCAF…FPLTTQGEPL (151 aa)) form the SF3 helicase domain. 490-497 (GPADTGKS) contacts ATP. Residue lysine 571 forms a Glycyl lysine isopeptide (Lys-Gly) (interchain with G-Cter in SUMO) linkage. The disordered stretch occupies residues 637 to 662 (DPDDEEENGNPSEPFRCVPGQNARTL).

It belongs to the papillomaviridae E1 protein family. As to quaternary structure, can form hexamers. Interacts with E2 protein; this interaction increases E1 DNA binding specificity. Interacts with host DNA polymerase subunit POLA2. Interacts with host single stranded DNA-binding protein RPA1. Interacts with host TOP1; this interaction stimulates the enzymatic activity of TOP1. Post-translationally, phosphorylated. Sumoylated.

It is found in the host nucleus. The catalysed reaction is Couples ATP hydrolysis with the unwinding of duplex DNA by translocating in the 3'-5' direction.. It carries out the reaction ATP + H2O = ADP + phosphate + H(+). ATP-dependent DNA 3'-5' helicase required for initiation of viral DNA replication. It forms a complex with the viral E2 protein. The E1-E2 complex binds to the replication origin which contains binding sites for both proteins. During the initial step, a dimer of E1 interacts with a dimer of protein E2 leading to a complex that binds the viral origin of replication with high specificity. Then, a second dimer of E1 displaces the E2 dimer in an ATP-dependent manner to form the E1 tetramer. Following this, two E1 monomers are added to each half of the site, which results in the formation of two E1 trimers on the viral ori. Subsequently, two hexamers will be created. The double hexamer acts as a bi-directional helicase machinery and unwinds the viral DNA and then recruits the host DNA polymerase to start replication. The sequence is that of Replication protein E1 from Homo sapiens (Human).